Here is a 183-residue protein sequence, read N- to C-terminus: Auxin-responsive protein IAA20 (183 aa).

Disordered stretches follow at residues 1–23 (MELELGLRLALPSPSPSPATATA) and 42–77 (GFEEALGGFKTDDDNDDGNGRGGDGDSDGEMGNKRR). The EAR-like (transcriptional repression) signature appears at 3 to 7 (LELGL). The PB1 domain occupies 98-183 (GGYVKVKMEG…KSVKRLKILV (86 aa)).

This sequence belongs to the Aux/IAA family. In terms of assembly, homodimers and heterodimers. In terms of tissue distribution, expressed at very low levels in etiolated seedlings and flowers.

Its subcellular location is the nucleus. Aux/IAA proteins are short-lived transcriptional factors that function as repressors of early auxin response genes at low auxin concentrations. The sequence is that of Auxin-responsive protein IAA20 (IAA20) from Oryza sativa subsp. japonica (Rice).